The primary structure comprises 136 residues: TBK1 inhibitor DP96R (136 aa).

Positions 66–86 (NNALEKPAGANNIPEKSAGRM) are disordered.

The protein belongs to the asfivirus DP96R family.

Inhibits cGAS-STING-mediated type I IFN expression and NF-kB activation by inhibiting TBK1 and IKBKB/IKKB. Inhibits host TBK1 phosphorylation. The polypeptide is TBK1 inhibitor DP96R (Ornithodoros (relapsing fever ticks)).